The following is a 448-amino-acid chain: Histidinol dehydrogenase (448 aa).

NAD(+)-binding residues include Y136, Q197, and N220. Residues S243, Q265, and H268 each coordinate substrate. Q265 and H268 together coordinate Zn(2+). Catalysis depends on proton acceptor residues E333 and H334. Substrate is bound by residues H334, D367, E421, and H426. D367 lines the Zn(2+) pocket. Zn(2+) is bound at residue H426.

Belongs to the histidinol dehydrogenase family. It depends on Zn(2+) as a cofactor.

The enzyme catalyses L-histidinol + 2 NAD(+) + H2O = L-histidine + 2 NADH + 3 H(+). The protein operates within amino-acid biosynthesis; L-histidine biosynthesis; L-histidine from 5-phospho-alpha-D-ribose 1-diphosphate: step 9/9. Catalyzes the sequential NAD-dependent oxidations of L-histidinol to L-histidinaldehyde and then to L-histidine. In Pseudomonas syringae pv. syringae (strain B728a), this protein is Histidinol dehydrogenase.